Reading from the N-terminus, the 296-residue chain is NADH-ubiquinone oxidoreductase chain 2 (296 aa).

8 helical membrane passes run 5-25 (LCLF…GLWL), 49-69 (YFLI…NQSF), 71-91 (FLIP…MWLV), 114-134 (LLGL…SAFI), 167-187 (FFLM…AVIL), 209-229 (ASIS…GFFI), 242-262 (LLVL…FSIA), and 276-296 (KMEI…LFFL).

It belongs to the complex I subunit 2 family.

The protein localises to the mitochondrion inner membrane. The catalysed reaction is a ubiquinone + NADH + 5 H(+)(in) = a ubiquinol + NAD(+) + 4 H(+)(out). Functionally, core subunit of the mitochondrial membrane respiratory chain NADH dehydrogenase (Complex I) that is believed to belong to the minimal assembly required for catalysis. Complex I functions in the transfer of electrons from NADH to the respiratory chain. The immediate electron acceptor for the enzyme is believed to be ubiquinone. The sequence is that of NADH-ubiquinone oxidoreductase chain 2 (ND2) from Artemia franciscana (Brine shrimp).